A 530-amino-acid chain; its full sequence is 26S proteasome non-ATPase regulatory subunit 3 (530 aa).

The segment covering 1–16 (MKQEGSARRRGADKAK) has biased composition (basic and acidic residues). Positions 1-65 (MKQEGSARRR…TEHSQRELDT (65 aa)) are disordered. Positions 17–30 (PPPGGEQEPPPPAP) are enriched in pro residues. Residue Lys36 forms a Glycyl lysine isopeptide (Lys-Gly) (interchain with G-Cter in SUMO1); alternate linkage. A Glycyl lysine isopeptide (Lys-Gly) (interchain with G-Cter in SUMO2); alternate cross-link involves residue Lys36. The region spanning 282–461 (ARYLYYTGRI…GYVQSKEMID (180 aa)) is the PCI domain. A phosphoserine mark is found at Ser414 and Ser426. Residues 496-530 (SYNKDLESAEERREREQQDLEFAKEMAEDDDDSFP) form a disordered region. Residues 497–521 (YNKDLESAEERREREQQDLEFAKEM) show a composition bias toward basic and acidic residues.

The protein belongs to the proteasome subunit S3 family. As to quaternary structure, component of the 19S proteasome regulatory particle complex. The 26S proteasome consists of a 20S core particle (CP) and two 19S regulatory subunits (RP). The regulatory particle is made of a lid composed of 9 subunits including PSMD3, a base containing 6 ATPases and few additional components. Interacts with UBQLN1 (via ubiquitin-like domain). Interacts with ERCC6.

In terms of biological role, component of the 26S proteasome, a multiprotein complex involved in the ATP-dependent degradation of ubiquitinated proteins. This complex plays a key role in the maintenance of protein homeostasis by removing misfolded or damaged proteins, which could impair cellular functions, and by removing proteins whose functions are no longer required. Therefore, the proteasome participates in numerous cellular processes, including cell cycle progression, apoptosis, or DNA damage repair. The chain is 26S proteasome non-ATPase regulatory subunit 3 (Psmd3) from Mus musculus (Mouse).